Reading from the N-terminus, the 295-residue chain is Glycine--tRNA ligase alpha subunit (295 aa).

It belongs to the class-II aminoacyl-tRNA synthetase family. Tetramer of two alpha and two beta subunits.

It is found in the cytoplasm. The catalysed reaction is tRNA(Gly) + glycine + ATP = glycyl-tRNA(Gly) + AMP + diphosphate. The polypeptide is Glycine--tRNA ligase alpha subunit (Bacillus licheniformis (strain ATCC 14580 / DSM 13 / JCM 2505 / CCUG 7422 / NBRC 12200 / NCIMB 9375 / NCTC 10341 / NRRL NRS-1264 / Gibson 46)).